A 685-amino-acid polypeptide reads, in one-letter code: Mitotic interactor and substrate of PLK1 (685 aa).

Serine 78 carries the post-translational modification Phosphoserine; by CDK1. 2 disordered regions span residues 155–181 (SGTVATLQAAPDHGDPRTPGPPRSTPL) and 207–253 (NKEV…QGKG). At threonine 172 the chain carries Phosphothreonine; by CDK1. Residue threonine 179 is modified to Phosphothreonine. Position 214 is a phosphoserine; by CDK1 (serine 214). The residue at position 219 (threonine 219) is a Phosphothreonine. At serine 284 the chain carries Phosphoserine; by CDK1. A Phosphothreonine; by CDK1 modification is found at threonine 287. The segment at 345–499 (GRPSLYVQRD…PWKLPRGSPQ (155 aa)) is disordered. Serine 348 is modified (phosphoserine). The span at 355 to 371 (MVQETQREEDHRREGLH) shows a compositional bias: basic and acidic residues. Residue threonine 377 is modified to Phosphothreonine; by CDK1. Residue serine 382 is modified to Phosphoserine. Over residues 392–417 (ALSSDSILSPDSILSPAPDARAADPA) the composition is skewed to low complexity. A phosphoserine; by PLK1 mark is found at serine 394, serine 395, and serine 397. Residues serine 406 and serine 436 each carry the phosphoserine modification. Over residues 454 to 469 (SGLSTVDTEAATSPKA) the composition is skewed to polar residues. Serine 477 carries the post-translational modification Phosphoserine; by PLK1. A compositionally biased stretch (polar residues) spans 478-488 (ESSGKPMSTKQ). Serine 547 and serine 549 each carry phosphoserine. The stretch at 551–575 (DLLERERESVLRREREVAEERRNAL) forms a coiled coil. Disordered stretches follow at residues 575–607 (LFPEVFSPTPDESCDQNSRSSSQASGITGSYSV) and 629–651 (PVDSAPPGQRKKEQWYAGINPSD). The residue at position 581 (serine 581) is a Phosphoserine; by PLK1. The residue at position 583 (threonine 583) is a Phosphothreonine. The segment covering 589–607 (DQNSRSSSQASGITGSYSV) has biased composition (polar residues). Serine 592 is subject to Phosphoserine; by PLK1. Serine 681 bears the Phosphoserine mark.

This sequence belongs to the MISP family. As to quaternary structure, associates with F-actin. Interacts with DCTN1; this interaction regulates DCTN1 distribution at the cell cortex. Interacts with PTK2/FAK and MAPRE1. Post-translationally, phosphorylated by CDK1 and PLK1. CDK1 is the priming kinase for PLK1 phosphorylation. Phosphorylation by PLK1 is required for proper spindle orientation at metaphase.

It is found in the cell junction. Its subcellular location is the focal adhesion. The protein resides in the cytoplasm. It localises to the cytoskeleton. The protein localises to the cell cortex. Plays a role in mitotic spindle orientation and mitotic progression. Regulates the distribution of dynactin at the cell cortex in a PLK1-dependent manner, thus stabilizing cortical and astral microtubule attachments required for proper mitotic spindle positioning. May link microtubules to the actin cytospkeleton and focal adhesions. May be required for directed cell migration and centrosome orientation. May also be necessary for proper stacking of the Golgi apparatus. The protein is Mitotic interactor and substrate of PLK1 of Pongo abelii (Sumatran orangutan).